The chain runs to 173 residues: NADH-ubiquinone oxidoreductase chain 6 (173 aa).

The next 5 helical transmembrane spans lie at 1-21, 27-47, 48-68, 87-107, and 139-159; these read MTYFVLFLGLCFVLGGLAVAS, YGVVGLVLASVAGCGWLLSLG, VSFVSLVLFMVYLGGMLVVFV, VVGYGVGFVMVLMVGMVVGGF, and CGVGMFLVAGWGLLLTLFVVL.

The protein belongs to the complex I subunit 6 family.

The protein resides in the mitochondrion membrane. It catalyses the reaction a ubiquinone + NADH + 5 H(+)(in) = a ubiquinol + NAD(+) + 4 H(+)(out). Core subunit of the mitochondrial membrane respiratory chain NADH dehydrogenase (Complex I) that is believed to belong to the minimal assembly required for catalysis. Complex I functions in the transfer of electrons from NADH to the respiratory chain. The immediate electron acceptor for the enzyme is believed to be ubiquinone. In Aethia pusilla (Least auklet), this protein is NADH-ubiquinone oxidoreductase chain 6 (MT-ND6).